Here is a 365-residue protein sequence, read N- to C-terminus: UDP-N-acetylglucosamine--N-acetylmuramyl-(pentapeptide) pyrophosphoryl-undecaprenol N-acetylglucosamine transferase (365 aa).

Residues 17 to 19, asparagine 129, arginine 167, serine 194, isoleucine 250, 269 to 274, and glutamine 295 contribute to the UDP-N-acetyl-alpha-D-glucosamine site; these read TGG and ALTVSE.

Belongs to the glycosyltransferase 28 family. MurG subfamily.

It localises to the cell inner membrane. It carries out the reaction di-trans,octa-cis-undecaprenyl diphospho-N-acetyl-alpha-D-muramoyl-L-alanyl-D-glutamyl-meso-2,6-diaminopimeloyl-D-alanyl-D-alanine + UDP-N-acetyl-alpha-D-glucosamine = di-trans,octa-cis-undecaprenyl diphospho-[N-acetyl-alpha-D-glucosaminyl-(1-&gt;4)]-N-acetyl-alpha-D-muramoyl-L-alanyl-D-glutamyl-meso-2,6-diaminopimeloyl-D-alanyl-D-alanine + UDP + H(+). The protein operates within cell wall biogenesis; peptidoglycan biosynthesis. Functionally, cell wall formation. Catalyzes the transfer of a GlcNAc subunit on undecaprenyl-pyrophosphoryl-MurNAc-pentapeptide (lipid intermediate I) to form undecaprenyl-pyrophosphoryl-MurNAc-(pentapeptide)GlcNAc (lipid intermediate II). This chain is UDP-N-acetylglucosamine--N-acetylmuramyl-(pentapeptide) pyrophosphoryl-undecaprenol N-acetylglucosamine transferase, found in Shewanella piezotolerans (strain WP3 / JCM 13877).